A 351-amino-acid chain; its full sequence is N-terminal EF-hand calcium-binding protein 1 (351 aa).

Position 4 is a phosphoserine (S4). 2 consecutive EF-hand domains span residues 26 to 61 (KGMSIFLDILRRADKNDDGKLSFEEFKAYFADGVLS) and 60 to 95 (LSGEELHELFHTIDTHNTNNLDTEELCEYFSQHLGE). The Ca(2+) site is built by D39, N41, D43, K45, and E50. Positions 135–163 (LLKETLNQLQSLQNSLECAMETTEEQTRQ) form a coiled coil. The tract at residues 180 to 203 (GKRSSRRVQRHNSFSPNSPQFNVS) is disordered. Residues 190–202 (HNSFSPNSPQFNV) show a composition bias toward polar residues. S192 and S197 each carry phosphoserine. A coiled-coil region spans residues 209 to 275 (EEDNQWMTQI…EEFQLALKHY (67 aa)). In terms of domain architecture, ABM spans 252-340 (MLVQRQMSVI…LETPELTSTM (89 aa)).

In terms of assembly, interacts with STX1. May interact with CPNE6. In terms of tissue distribution, expressed in brain (at protein level).

It is found in the cytoplasm. This chain is N-terminal EF-hand calcium-binding protein 1 (NECAB1), found in Homo sapiens (Human).